Here is a 277-residue protein sequence, read N- to C-terminus: Large ribosomal subunit protein uL2 (277 aa).

Positions 222–259 (GSVMNPNDHPHGGGEGKSPVGRPSPVTPWGKPALGYKT) are disordered.

This sequence belongs to the universal ribosomal protein uL2 family. Part of the 50S ribosomal subunit. Forms a bridge to the 30S subunit in the 70S ribosome.

In terms of biological role, one of the primary rRNA binding proteins. Required for association of the 30S and 50S subunits to form the 70S ribosome, for tRNA binding and peptide bond formation. It has been suggested to have peptidyltransferase activity; this is somewhat controversial. Makes several contacts with the 16S rRNA in the 70S ribosome. The protein is Large ribosomal subunit protein uL2 of Clostridium beijerinckii (strain ATCC 51743 / NCIMB 8052) (Clostridium acetobutylicum).